Consider the following 327-residue polypeptide: Fumigatonoid B endoperoxide isomerase nvfE (327 aa).

A disordered region spans residues 1–22 (MGRDQVSHKRSQNSNVSEIPDL). Residues His152, Asp154, and His234 each coordinate Fe cation.

The protein belongs to the PhyH family. In terms of assembly, homodimer. Fe cation is required as a cofactor.

The catalysed reaction is fumigatonoid B = fumigatonoid C. It functions in the pathway secondary metabolite biosynthesis; terpenoid biosynthesis. Fumigatonoid B endoperoxide isomerase; part of the gene cluster that mediates the biosynthesis of novofumigatonin, a heavily oxygenated meroterpenoid containing a unique orthoester moiety. The first step of the pathway is the synthesis of 3,5-dimethylorsellinic acid (DMOA) by the polyketide synthase nvfA via condensation of one acetyl-CoA starter unit with 3 malonyl-CoA units and 2 methylations. DMOA is then converted to farnesyl-DMOA by the farnesyltransferase nvfB. Epoxydation by FAD-dependent monooxygenase nvfK, followed by a protonation-initiated cyclization catalyzed by the terpene cyclase nvfL leads to the production of asnavolin H. The short chain dehydrogenase nvfC then as a 3-OH dehydrogenase of asnovolin H to yield chemesin D. There are two branches to synthesize asnovolin A from chemesin D. In one branch, chemesin D undergoes Baeyer-Villiger oxidation by nvfH, methylation by nvfJ, and enoyl reduction by the nvfM D enoylreductase that reduces the double bond between C-5'and C-6', to form respectively asnovolin I, asnovolin K, and asnovolin A. In the other branch, the methylation precedes the Baeyer-Villiger oxidation and the enoyl reduction to yield asnovolin A via the asnovolin J intermediate. Asnovolin A is further converted to fumigatonoid A by the Fe(II)/2-oxoglutarate-dependent dioxygenase nvfI that catalyzes an endoperoxidation reaction. The alpha/beta hydrolase nvfD then acts as an epimerase that converts fumigatonoid A to its C-5' epimer, which then undergoes spontaneous or nvfD-catalyzed lactonization. The following step utilizes the ketoreductase nvfG to produce fumigatonoid B. The dioxygenase nvfE further converts fumigatonoid B into fumigatonoid C. Finally the Fe(II)/2-oxoglutarate-dependent dioxygenase nvfF catalyzes two rounds of oxidation to transform fumigatonoid C into the end product, novofumigatonin A. In Aspergillus novofumigatus (strain IBT 16806), this protein is Fumigatonoid B endoperoxide isomerase nvfE.